A 123-amino-acid chain; its full sequence is Ribosome-binding factor A (123 aa).

It belongs to the RbfA family. Monomer. Binds 30S ribosomal subunits, but not 50S ribosomal subunits or 70S ribosomes.

The protein resides in the cytoplasm. Its function is as follows. One of several proteins that assist in the late maturation steps of the functional core of the 30S ribosomal subunit. Associates with free 30S ribosomal subunits (but not with 30S subunits that are part of 70S ribosomes or polysomes). Required for efficient processing of 16S rRNA. May interact with the 5'-terminal helix region of 16S rRNA. In Dechloromonas aromatica (strain RCB), this protein is Ribosome-binding factor A.